An 89-amino-acid polypeptide reads, in one-letter code: Small ribosomal subunit protein uS15 (89 aa).

Belongs to the universal ribosomal protein uS15 family. Part of the 30S ribosomal subunit. Forms a bridge to the 50S subunit in the 70S ribosome, contacting the 23S rRNA.

In terms of biological role, one of the primary rRNA binding proteins, it binds directly to 16S rRNA where it helps nucleate assembly of the platform of the 30S subunit by binding and bridging several RNA helices of the 16S rRNA. Functionally, forms an intersubunit bridge (bridge B4) with the 23S rRNA of the 50S subunit in the ribosome. This is Small ribosomal subunit protein uS15 from Renibacterium salmoninarum (strain ATCC 33209 / DSM 20767 / JCM 11484 / NBRC 15589 / NCIMB 2235).